A 160-amino-acid chain; its full sequence is Ribonuclease HI (160 aa).

In terms of domain architecture, RNase H type-1 spans 4–147 (TPNSVTLYTD…CDRLAVAAYQ (144 aa)). The Mg(2+) site is built by Asp-13, Glu-52, Asp-74, and Asp-139.

The protein belongs to the RNase H family. As to quaternary structure, monomer. Mg(2+) serves as cofactor.

The protein localises to the cytoplasm. It catalyses the reaction Endonucleolytic cleavage to 5'-phosphomonoester.. In terms of biological role, endonuclease that specifically degrades the RNA of RNA-DNA hybrids. This Synechocystis sp. (strain ATCC 27184 / PCC 6803 / Kazusa) protein is Ribonuclease HI (rnhA).